A 126-amino-acid chain; its full sequence is Putative regulator AldR (126 aa).

This sequence belongs to the RutC family.

Its function is as follows. Implicated in the regulation of isoleucine biosynthesis. This is Putative regulator AldR (aldR) from Lactococcus lactis subsp. lactis (strain IL1403) (Streptococcus lactis).